The primary structure comprises 146 residues: Large ribosomal subunit protein bL19 (146 aa).

Belongs to the bacterial ribosomal protein bL19 family.

In terms of biological role, this protein is located at the 30S-50S ribosomal subunit interface and may play a role in the structure and function of the aminoacyl-tRNA binding site. In Bartonella bacilliformis (strain ATCC 35685 / KC583 / Herrer 020/F12,63), this protein is Large ribosomal subunit protein bL19.